A 126-amino-acid polypeptide reads, in one-letter code: UPF0231 protein VC0395_A0134/VC395_0622 (126 aa).

It belongs to the UPF0231 family.

In Vibrio cholerae serotype O1 (strain ATCC 39541 / Classical Ogawa 395 / O395), this protein is UPF0231 protein VC0395_A0134/VC395_0622.